Reading from the N-terminus, the 547-residue chain is Chaperonin GroEL (547 aa).

Residues 30–33, Lys51, 87–91, Gly415, and Asp496 contribute to the ATP site; these read TLGP and DGTTT.

Belongs to the chaperonin (HSP60) family. In terms of assembly, forms a cylinder of 14 subunits composed of two heptameric rings stacked back-to-back. Interacts with the co-chaperonin GroES.

The protein localises to the cytoplasm. It catalyses the reaction ATP + H2O + a folded polypeptide = ADP + phosphate + an unfolded polypeptide.. Functionally, together with its co-chaperonin GroES, plays an essential role in assisting protein folding. The GroEL-GroES system forms a nano-cage that allows encapsulation of the non-native substrate proteins and provides a physical environment optimized to promote and accelerate protein folding. The protein is Chaperonin GroEL of Actinobacillus succinogenes (strain ATCC 55618 / DSM 22257 / CCUG 43843 / 130Z).